We begin with the raw amino-acid sequence, 70 residues long: MSRLAPPLRLLQAPLKCWAVPKAHVSAKPARTPTSPMEQAVGLSVMFVSFLVPSGWVLSHLESYKKSSTT.

The transit peptide at M1–H24 directs the protein to the mitochondrion. Over V25 to S35 the chain is Mitochondrial matrix. The chain crosses the membrane as a helical span at residues P36 to S59. Over H60–T70 the chain is Mitochondrial intermembrane.

This sequence belongs to the cytochrome c oxidase VIII family. As to quaternary structure, component of the cytochrome c oxidase (complex IV, CIV), a multisubunit enzyme composed of 14 subunits. The complex is composed of a catalytic core of 3 subunits MT-CO1, MT-CO2 and MT-CO3, encoded in the mitochondrial DNA, and 11 supernumerary subunits COX4I, COX5A, COX5B, COX6A, COX6B, COX6C, COX7A, COX7B, COX7C, COX8 and NDUFA4, which are encoded in the nuclear genome. The complex exists as a monomer or a dimer and forms supercomplexes (SCs) in the inner mitochondrial membrane with NADH-ubiquinone oxidoreductase (complex I, CI) and ubiquinol-cytochrome c oxidoreductase (cytochrome b-c1 complex, complex III, CIII), resulting in different assemblies (supercomplex SCI(1)III(2)IV(1) and megacomplex MCI(2)III(2)IV(2)).

Its subcellular location is the mitochondrion inner membrane. It participates in energy metabolism; oxidative phosphorylation. In terms of biological role, component of the cytochrome c oxidase, the last enzyme in the mitochondrial electron transport chain which drives oxidative phosphorylation. The respiratory chain contains 3 multisubunit complexes succinate dehydrogenase (complex II, CII), ubiquinol-cytochrome c oxidoreductase (cytochrome b-c1 complex, complex III, CIII) and cytochrome c oxidase (complex IV, CIV), that cooperate to transfer electrons derived from NADH and succinate to molecular oxygen, creating an electrochemical gradient over the inner membrane that drives transmembrane transport and the ATP synthase. Cytochrome c oxidase is the component of the respiratory chain that catalyzes the reduction of oxygen to water. Electrons originating from reduced cytochrome c in the intermembrane space (IMS) are transferred via the dinuclear copper A center (CU(A)) of subunit 2 and heme A of subunit 1 to the active site in subunit 1, a binuclear center (BNC) formed by heme A3 and copper B (CU(B)). The BNC reduces molecular oxygen to 2 water molecules using 4 electrons from cytochrome c in the IMS and 4 protons from the mitochondrial matrix. This Carlito syrichta (Philippine tarsier) protein is Cytochrome c oxidase subunit 8B, mitochondrial (COX8B).